Here is a 112-residue protein sequence, read N- to C-terminus: uncharacterized protein (112 aa).

3 residues coordinate Fe cation: cysteine 39, cysteine 105, and cysteine 107.

The protein belongs to the HesB/IscA family. Ycf83 subfamily.

Its subcellular location is the plastid. It localises to the chloroplast. This is an uncharacterized protein from Galdieria sulphuraria (Red alga).